A 123-amino-acid chain; its full sequence is Ferredoxin-5 (123 aa).

Positions 2-119 (PNITFTSPIM…DVMVHFTGTP (118 aa)) constitute a 2Fe-2S ferredoxin-type domain. Positions 42, 47, 50, and 102 each coordinate [2Fe-2S] cluster.

Belongs to the 2Fe2S plant-type ferredoxin family. Requires [2Fe-2S] cluster as cofactor.

Functionally, ferredoxins are iron-sulfur proteins that transfer electrons in a wide variety of metabolic reactions. This ferredoxin probably participates in nitrogen fixation. The polypeptide is Ferredoxin-5 (fdxD) (Rhodobacter capsulatus (Rhodopseudomonas capsulata)).